Here is a 205-residue protein sequence, read N- to C-terminus: Metal-independent carbonic anhydrase (205 aa).

The first 24 residues, 1–24, serve as a signal peptide directing secretion; sequence MNLFKPRILVLFAATALISGIAIV. Residues Thr-106 and Tyr-124 each contribute to the hydrogencarbonate site.

This sequence belongs to the iota-class carbonic anhydrase family. As to quaternary structure, homotetramer; dimer of dimers. Does not require a metal cofactor. is required as a cofactor.

The catalysed reaction is hydrogencarbonate + H(+) = CO2 + H2O. With respect to regulation, activity is not affected by EDTA or 2,6-pyridinedicarboxylic acid (PDA). Activity is not affected by addition of most divalent metal ions, except zinc ions which decrease the activity. Inhibited by the iodide ion. Functionally, catalyzes the hydration of carbon dioxide (CO2) to bicarbonate (HCO3(-)). Has only very low bicarbonate dehydration activity. May function even in metal-poor environments. This Nostoc sp. (strain PCC 7120 / SAG 25.82 / UTEX 2576) protein is Metal-independent carbonic anhydrase.